Reading from the N-terminus, the 615-residue chain is Increased rDNA silencing protein 4 (615 aa).

4 disordered regions span residues 38–135 (SNEV…SSHS), 152–260 (LLGI…NRSQ), 277–304 (PSIA…NYSS), and 323–445 (KPKH…NEDK). Residues 50 to 65 (VSRNPQTRLSEPSLQK) are compositionally biased toward polar residues. Low complexity-rich tracts occupy residues 121–135 (HSQS…SSHS) and 157–168 (SRSSSRNGSNES). Serine 180 is subject to Phosphoserine. The segment covering 184 to 198 (LLTSFSSGRRLSSSS) has biased composition (low complexity). The span at 248-260 (NPDTSDVISNRSQ) shows a compositional bias: polar residues. A compositionally biased stretch (low complexity) spans 281–290 (SSNTTTTTSN). The segment covering 365 to 377 (ENDHASSLHEGNL) has biased composition (basic and acidic residues). Residues 389–402 (DVYDDTDSDSESDQ) are compositionally biased toward acidic residues. The segment covering 409–438 (KPRKRDRIKRKIRNSANKTAHHRPIHRTRD) has biased composition (basic residues). The EH domain occupies 460-571 (ERKRYESMWV…QCVWDSVDRY (112 aa)).

Belongs to the IRS4 family. Interacts with INP51.

Its function is as follows. With TAX4, acts as a positive regulator of INP51 activity and phosphatidylinositol 4,5-bisphosphate turnover. Negatively regulates signaling through the cell integrity pathway, including the MAP kinase SLT2. Also seems to be involved in rDNA silencing. The protein is Increased rDNA silencing protein 4 (IRS4) of Saccharomyces cerevisiae (strain ATCC 204508 / S288c) (Baker's yeast).